A 207-amino-acid chain; its full sequence is GTP cyclohydrolase 1 (207 aa).

Zn(2+)-binding residues include cysteine 94, histidine 97, and cysteine 167.

Belongs to the GTP cyclohydrolase I family. Toroid-shaped homodecamer, composed of two pentamers of five dimers.

The enzyme catalyses GTP + H2O = 7,8-dihydroneopterin 3'-triphosphate + formate + H(+). Its pathway is cofactor biosynthesis; 7,8-dihydroneopterin triphosphate biosynthesis; 7,8-dihydroneopterin triphosphate from GTP: step 1/1. The polypeptide is GTP cyclohydrolase 1 (Thermobifida fusca (strain YX)).